Consider the following 210-residue polypeptide: Proteasome subunit beta (210 aa).

Positions 1–7 (MEVLKTG) are cleaved as a propeptide — removed in mature form; by autocatalysis. Threonine 8 acts as the Nucleophile in catalysis.

It belongs to the peptidase T1B family. In terms of assembly, the 20S proteasome core is composed of 14 alpha and 14 beta subunits that assemble into four stacked heptameric rings, resulting in a barrel-shaped structure. The two inner rings, each composed of seven catalytic beta subunits, are sandwiched by two outer rings, each composed of seven alpha subunits. The catalytic chamber with the active sites is on the inside of the barrel. Has a gated structure, the ends of the cylinder being occluded by the N-termini of the alpha-subunits. Is capped at one or both ends by the proteasome regulatory ATPase, PAN.

The protein resides in the cytoplasm. The enzyme catalyses Cleavage of peptide bonds with very broad specificity.. Its activity is regulated as follows. The formation of the proteasomal ATPase PAN-20S proteasome complex, via the docking of the C-termini of PAN into the intersubunit pockets in the alpha-rings, triggers opening of the gate for substrate entry. Interconversion between the open-gate and close-gate conformations leads to a dynamic regulation of the 20S proteasome proteolysis activity. Its function is as follows. Component of the proteasome core, a large protease complex with broad specificity involved in protein degradation. In Picrophilus torridus (strain ATCC 700027 / DSM 9790 / JCM 10055 / NBRC 100828 / KAW 2/3), this protein is Proteasome subunit beta.